Here is a 199-residue protein sequence, read N- to C-terminus: MRDAVRAKTNRRSVAGMPAELMDLDLRHLHLRIGEGILAARPALIATVLGSCVSVTFHHPSTETGGIFHAMLPTVLGAADGARTPCKYVDAAIETLLGQFARRGIAANDLVVKLFGGAFTMNPEEKQRLRCIVDVGGRNVEVARATLQRFGIEPQSEHILGDRGRKLFFHSGTGEVWVRLLRRTEPPLPSALVCRDDLT.

Belongs to the CheD family.

It carries out the reaction L-glutaminyl-[protein] + H2O = L-glutamyl-[protein] + NH4(+). Probably deamidates glutamine residues to glutamate on methyl-accepting chemotaxis receptors (MCPs), playing an important role in chemotaxis. In Nitratidesulfovibrio vulgaris (strain ATCC 29579 / DSM 644 / CCUG 34227 / NCIMB 8303 / VKM B-1760 / Hildenborough) (Desulfovibrio vulgaris), this protein is Probable chemoreceptor glutamine deamidase CheD.